Consider the following 84-residue polypeptide: Putative membrane protein insertion efficiency factor (84 aa).

Belongs to the UPF0161 family.

The protein localises to the cell inner membrane. Functionally, could be involved in insertion of integral membrane proteins into the membrane. The chain is Putative membrane protein insertion efficiency factor from Shewanella denitrificans (strain OS217 / ATCC BAA-1090 / DSM 15013).